A 298-amino-acid chain; its full sequence is Probable alpha-L-glutamate ligase 2 (298 aa).

Positions Met104–Glu287 constitute an ATP-grasp domain. ATP contacts are provided by residues Lys141, Glu178–Tyr179, Asp187, and Arg211–Asn213. Mg(2+) is bound by residues Asp248, Glu260, and Asn262. Residues Asp248, Glu260, and Asn262 each coordinate Mn(2+).

This sequence belongs to the RimK family. It depends on Mg(2+) as a cofactor. The cofactor is Mn(2+).

This is Probable alpha-L-glutamate ligase 2 from Shewanella frigidimarina (strain NCIMB 400).